A 257-amino-acid polypeptide reads, in one-letter code: Ribonuclease PH (257 aa).

Phosphate-binding positions include Arg-87 and 125 to 127; that span reads GTR.

It belongs to the RNase PH family. In terms of assembly, homohexameric ring arranged as a trimer of dimers.

The enzyme catalyses tRNA(n+1) + phosphate = tRNA(n) + a ribonucleoside 5'-diphosphate. In terms of biological role, phosphorolytic 3'-5' exoribonuclease that plays an important role in tRNA 3'-end maturation. Removes nucleotide residues following the 3'-CCA terminus of tRNAs; can also add nucleotides to the ends of RNA molecules by using nucleoside diphosphates as substrates, but this may not be physiologically important. Probably plays a role in initiation of 16S rRNA degradation (leading to ribosome degradation) during starvation. This Geobacillus kaustophilus (strain HTA426) protein is Ribonuclease PH.